The chain runs to 329 residues: Oxidoreductase sirO (329 aa).

NADP(+) is bound at residue aspartate 54. Tyrosine 59 serves as the catalytic Proton donor. A substrate-binding site is contributed by histidine 118. NADP(+) contacts are provided by residues 148–149 (SN), glutamine 174, 203–213 (SPLCCGLLINA), and 288–296 (SSARQLEES).

Belongs to the aldo/keto reductase family. Aldo/keto reductase 2 subfamily.

It participates in mycotoxin biosynthesis. In terms of biological role, oxidoreductase; part of the gene cluster that mediates the biosynthesis of sirodesmin PL, an epipolythiodioxopiperazine (ETP) characterized by a disulfide bridged cyclic dipeptide and that acts as a phytotoxin which is involved in the blackleg didease of canola. SirD catalyzes the O-prenylation of L-tyrosine (L-Tyr) in the presence of dimethylallyl diphosphate (DMAPP) to yield 4-O-dimethylallyl-L-Tyr, and therefore represents probably the first pathway-specific enzyme in the biosynthesis of sirodesmin PL. 4-O-dimethylallyl-L-Tyr, then undergoes condensation with L-Ser in a reaction catalyzed by the non-ribosomal peptide synthase sirP to form the diketopiperazine (DKP) backbone. Further bishydroxylation of the DKP performed by the cytochrome P450 monooxygenase sirC leads to the production of the intermediate phomamide. This step is essential to form the reactive thiol group required for toxicity of sirodesmin PL. The next steps of sirodesmin biosynthesis are not well understood yet, but some predictions could be made from intermediate compounds identification. Phomamide is converted into phomalizarine via oxidation, probably by sirT. Further oxidation, methylation (by sirM or sirN) and reduction steps convert phomalizarine to deacetyl sirodesmin. Finally, acetyltransferase sirH probably acetylates deacetyl sirodesmin to produce sirodesmin PL. The protein is Oxidoreductase sirO of Leptosphaeria maculans (Blackleg fungus).